The following is a 255-amino-acid chain: MADELIIGDKALTSRLFIGTGKFASHEIMGQAVSQSGAQVVTVALRRVDLDNPQESELKFIPAGCVLMPNTSGARTAEEAVKIARIARAAGCGNWVKIEVVTDQRYLLPDNYETVKATEILAKEGFVVLPYMNPDLMVAKRLKEAGAAAIMPLGAPIGSNRGLKTREMIRILIEEIDLPIIVDAGIGKPSEAMEAMEMGAAAVLVNTAIATARDPVAMARAFSMAVEAGRMAYLAGLAPTREYAEASSPLTGFLV.

Lysine 97 serves as the catalytic Schiff-base intermediate with DXP. 1-deoxy-D-xylulose 5-phosphate-binding positions include glycine 158, alanine 184 to glycine 185, and asparagine 206 to threonine 207.

It belongs to the ThiG family. As to quaternary structure, homotetramer. Forms heterodimers with either ThiH or ThiS.

The protein resides in the cytoplasm. It catalyses the reaction [ThiS sulfur-carrier protein]-C-terminal-Gly-aminoethanethioate + 2-iminoacetate + 1-deoxy-D-xylulose 5-phosphate = [ThiS sulfur-carrier protein]-C-terminal Gly-Gly + 2-[(2R,5Z)-2-carboxy-4-methylthiazol-5(2H)-ylidene]ethyl phosphate + 2 H2O + H(+). It functions in the pathway cofactor biosynthesis; thiamine diphosphate biosynthesis. Its function is as follows. Catalyzes the rearrangement of 1-deoxy-D-xylulose 5-phosphate (DXP) to produce the thiazole phosphate moiety of thiamine. Sulfur is provided by the thiocarboxylate moiety of the carrier protein ThiS. In vitro, sulfur can be provided by H(2)S. This chain is Thiazole synthase, found in Moorella thermoacetica (strain ATCC 39073 / JCM 9320).